The chain runs to 494 residues: Chromosomal replication initiator protein DnaA (494 aa).

The interval 1–103 (MTTDPDPPFV…PVSDESDSGS (103 aa)) is domain I, interacts with DnaA modulators. The interval 94–117 (PVSDESDSGSVASPAPVAAADPDD) is disordered. Low complexity predominate over residues 101 to 113 (SGSVASPAPVAAA). The interval 104-153 (VASPAPVAAADPDDDVVDDDLAARASAEESWPSYFTNRANRAAEDDATSV) is domain II. The interval 154-370 (NLNRRYTFDT…GALIRVTAFA (217 aa)) is domain III, AAA+ region. ATP contacts are provided by G198, G200, K201, and T202. Residues 371–494 (SLNKTPIDKS…TTRIRQRAKR (124 aa)) form a domain IV, binds dsDNA region.

Belongs to the DnaA family. As to quaternary structure, oligomerizes as a right-handed, spiral filament on DNA at oriC.

The protein resides in the cytoplasm. Functionally, plays an essential role in the initiation and regulation of chromosomal replication. ATP-DnaA binds to the origin of replication (oriC) to initiate formation of the DNA replication initiation complex once per cell cycle. Binds the DnaA box (a 9 base pair repeat at the origin) and separates the double-stranded (ds)DNA. Forms a right-handed helical filament on oriC DNA; dsDNA binds to the exterior of the filament while single-stranded (ss)DNA is stabiized in the filament's interior. The ATP-DnaA-oriC complex binds and stabilizes one strand of the AT-rich DNA unwinding element (DUE), permitting loading of DNA polymerase. After initiation quickly degrades to an ADP-DnaA complex that is not apt for DNA replication. Binds acidic phospholipids. This Mycolicibacterium vanbaalenii (strain DSM 7251 / JCM 13017 / BCRC 16820 / KCTC 9966 / NRRL B-24157 / PYR-1) (Mycobacterium vanbaalenii) protein is Chromosomal replication initiator protein DnaA.